The chain runs to 160 residues: Phosphopantetheine adenylyltransferase (160 aa).

Threonine 9 contributes to the substrate binding site. ATP contacts are provided by residues 9 to 10 and histidine 17; that span reads TF. Substrate is bound by residues lysine 41, leucine 73, and arginine 87. Residues 88–90, glutamate 98, and 123–129 contribute to the ATP site; these read GLR and FSYTSSS.

Belongs to the bacterial CoaD family. In terms of assembly, homohexamer. Mg(2+) serves as cofactor.

It is found in the cytoplasm. It catalyses the reaction (R)-4'-phosphopantetheine + ATP + H(+) = 3'-dephospho-CoA + diphosphate. The protein operates within cofactor biosynthesis; coenzyme A biosynthesis; CoA from (R)-pantothenate: step 4/5. Functionally, reversibly transfers an adenylyl group from ATP to 4'-phosphopantetheine, yielding dephospho-CoA (dPCoA) and pyrophosphate. This chain is Phosphopantetheine adenylyltransferase, found in Opitutus terrae (strain DSM 11246 / JCM 15787 / PB90-1).